A 358-amino-acid chain; its full sequence is 3-dehydroquinate synthase (358 aa).

NAD(+) is bound by residues 69-74 (DGEQYK), 103-107 (GVIGD), 127-128 (TT), Lys-140, Lys-149, and 167-170 (TLNT). The Zn(2+) site is built by Glu-182, His-245, and His-262.

The protein belongs to the sugar phosphate cyclases superfamily. Dehydroquinate synthase family. Co(2+) serves as cofactor. Requires Zn(2+) as cofactor. NAD(+) is required as a cofactor.

It is found in the cytoplasm. It catalyses the reaction 7-phospho-2-dehydro-3-deoxy-D-arabino-heptonate = 3-dehydroquinate + phosphate. The protein operates within metabolic intermediate biosynthesis; chorismate biosynthesis; chorismate from D-erythrose 4-phosphate and phosphoenolpyruvate: step 2/7. Its function is as follows. Catalyzes the conversion of 3-deoxy-D-arabino-heptulosonate 7-phosphate (DAHP) to dehydroquinate (DHQ). This is 3-dehydroquinate synthase from Hydrogenovibrio crunogenus (strain DSM 25203 / XCL-2) (Thiomicrospira crunogena).